Reading from the N-terminus, the 325-residue chain is Pseudouridylate synthase TRUB2, mitochondrial (325 aa).

The Nucleophile role is filled by D101. The tract at residues 292–325 is disordered; it reads QTEGVSRGNPDREAAEGPIPGPSRGAEGEGELRA.

This sequence belongs to the pseudouridine synthase TruB family.

It is found in the mitochondrion matrix. The catalysed reaction is a uridine in mRNA = a pseudouridine in mRNA. It carries out the reaction uridine(55) in tRNA = pseudouridine(55) in tRNA. Its function is as follows. Minor enzyme contributing to the isomerization of uridine to pseudouridine (pseudouridylation) of specific mitochondrial mRNAs (mt-mRNAs) such as COXI and COXIII mt-mRNAs, modulating the efficiency of mitochondrial protein synthesis without changes in transcript abundance or stability. Also catalyzes pseudouridylation of some tRNAs, including synthesis of pseudouridine(55) from uracil-55, in the psi GC loop of a subset of tRNAs. The protein is Pseudouridylate synthase TRUB2, mitochondrial of Xenopus tropicalis (Western clawed frog).